A 143-amino-acid chain; its full sequence is CRISPR-associated endoribonuclease Cas2 (143 aa).

Position 14 (Asp14) interacts with Mg(2+).

The protein belongs to the CRISPR-associated endoribonuclease Cas2 protein family. Homodimer, forms a heterotetramer with a Cas1 homodimer. The cofactor is Mg(2+).

In terms of biological role, CRISPR (clustered regularly interspaced short palindromic repeat), is an adaptive immune system that provides protection against mobile genetic elements (viruses, transposable elements and conjugative plasmids). CRISPR clusters contain sequences complementary to antecedent mobile elements and target invading nucleic acids. CRISPR clusters are transcribed and processed into CRISPR RNA (crRNA). Functions as a ssRNA-specific endoribonuclease. Involved in the integration of spacer DNA into the CRISPR cassette. This Campylobacter jejuni subsp. jejuni serotype O:2 (strain ATCC 700819 / NCTC 11168) protein is CRISPR-associated endoribonuclease Cas2.